Reading from the N-terminus, the 792-residue chain is Phenylalanine--tRNA ligase beta subunit (792 aa).

The 109-residue stretch at 39–147 (ARTLEKVVVG…ADAPIGKNIQ (109 aa)) folds into the tRNA-binding domain. A B5 domain is found at 400–475 (PKIPRIILRP…HLYGYDRIPQ (76 aa)). Residues aspartate 453, aspartate 459, glutamate 462, and glutamate 463 each contribute to the Mg(2+) site. The 95-residue stretch at 697-791 (SKFPSIRRDI…LERKFNAKLR (95 aa)) folds into the FDX-ACB domain.

The protein belongs to the phenylalanyl-tRNA synthetase beta subunit family. Type 1 subfamily. Tetramer of two alpha and two beta subunits. Requires Mg(2+) as cofactor.

It localises to the cytoplasm. It carries out the reaction tRNA(Phe) + L-phenylalanine + ATP = L-phenylalanyl-tRNA(Phe) + AMP + diphosphate + H(+). This Coxiella burnetii (strain RSA 493 / Nine Mile phase I) protein is Phenylalanine--tRNA ligase beta subunit.